The primary structure comprises 317 residues: Acetyl-coenzyme A carboxylase carboxyl transferase subunit alpha (317 aa).

The CoA carboxyltransferase C-terminal domain occupies 39-293 (KLEAKAQKAL…KEAVVEALGA (255 aa)).

The protein belongs to the AccA family. Acetyl-CoA carboxylase is a heterohexamer composed of biotin carboxyl carrier protein (AccB), biotin carboxylase (AccC) and two subunits each of ACCase subunit alpha (AccA) and ACCase subunit beta (AccD).

It is found in the cytoplasm. The enzyme catalyses N(6)-carboxybiotinyl-L-lysyl-[protein] + acetyl-CoA = N(6)-biotinyl-L-lysyl-[protein] + malonyl-CoA. It functions in the pathway lipid metabolism; malonyl-CoA biosynthesis; malonyl-CoA from acetyl-CoA: step 1/1. In terms of biological role, component of the acetyl coenzyme A carboxylase (ACC) complex. First, biotin carboxylase catalyzes the carboxylation of biotin on its carrier protein (BCCP) and then the CO(2) group is transferred by the carboxyltransferase to acetyl-CoA to form malonyl-CoA. The sequence is that of Acetyl-coenzyme A carboxylase carboxyl transferase subunit alpha from Beijerinckia indica subsp. indica (strain ATCC 9039 / DSM 1715 / NCIMB 8712).